Reading from the N-terminus, the 95-residue chain is Protein TusB (95 aa).

This sequence belongs to the DsrH/TusB family. Heterohexamer, formed by a dimer of trimers. The hexameric TusBCD complex contains 2 copies each of TusB, TusC and TusD. The TusBCD complex interacts with TusE.

The protein localises to the cytoplasm. In terms of biological role, part of a sulfur-relay system required for 2-thiolation of 5-methylaminomethyl-2-thiouridine (mnm(5)s(2)U) at tRNA wobble positions. In Erwinia tasmaniensis (strain DSM 17950 / CFBP 7177 / CIP 109463 / NCPPB 4357 / Et1/99), this protein is Protein TusB.